The sequence spans 1214 residues: Delta-latroinsectotoxin-Lt1a (1214 aa).

The segment at 64–89 is helix H2 is the probable transmembrane region of the tetrameric pore inserted in the target cell membrane; sequence IGSIPVIGEVVGIVTAPIAIVSHITS. The helix H8 is the probable transmembrane region of the tetrameric pore inserted in the target cell membrane stretch occupies residues 250-269; sequence ALYALFYGTQTYAAVMFFLL. ANK repeat units lie at residues 464–497, 501–532, 536–565, 570–600, 604–633, 637–666, 670–699, 706–734, 740–769, 773–802, 806–835, 839–868, 872–901, 906–936, and 966–994; these read DIHR…DIEA, NDRS…DIEL, NGFT…DVNA, TNLT…KVNE, DGFT…DKNA, SGLT…DLNI, NHMA…KVSI, NNWT…DINL, GNLT…NIEE, EGYT…DIEA, DNLT…DIGA, DGST…NLKE, NKYL…SLKD, EGRT…TLDE, and VKPT…PEGS. Residues 1020-1214 constitute a propeptide, C-terminal domain cleavage is required for toxin activation; sequence IVKETNSRYL…IDVHQKMFLR (195 aa).

This sequence belongs to the cationic peptide 01 (latrotoxin) family. 04 (delta-latroinsectotoxin) subfamily. As to quaternary structure, homotetramer in membrane. Expressed by the venom gland.

It localises to the secreted. The protein resides in the target cell membrane. In terms of biological role, insecticidal presynaptic neurotoxin that induces massive neurotransmitter release at insect (but not vertebrate) neuromuscular junctions. Native toxin forms cation-permeable pores (with high permeability to calcium) in lipid membranes locust muscle membrane and artificial lipid bilayers. May bind to insect neurexin-1 homolog, insect adhesion G protein-coupled receptor L1 homolog, and insect receptor-type tyrosine-protein phosphatase S homolog, and induces neurotransmitter exocytosis both by forming tetrameric pores in membranes and signaling via G protein-coupled receptor. Oligomerization is a process independent of divalent cations. This is Delta-latroinsectotoxin-Lt1a from Latrodectus tredecimguttatus (Mediterranean black widow spider).